A 2504-amino-acid polypeptide reads, in one-letter code: Fatty acid synthase (2504 aa).

M1 carries the N-acetylmethionine modification. The 406-residue stretch at 1 to 406 folds into the Ketosynthase family 3 (KS3) domain; sequence MEEVVIAGMS…GSNVHVILQP (406 aa). At K59 the chain carries N6-acetyllysine. S63 carries the phosphoserine modification. At K70 the chain carries N6-acetyllysine. The For beta-ketoacyl synthase activity role is filled by C161. S207 bears the Phosphoserine mark. H293 functions as the For beta-ketoacyl synthase activity in the catalytic mechanism. K298 bears the N6-acetyllysine mark. H331 (for beta-ketoacyl synthase activity) is an active-site residue. The tract at residues 429-817 is acyl and malonyl transferases; that stretch reads RTLEAVQDLL…INVNPNALFP (389 aa). N6-acetyllysine is present on K528. The active-site For malonyltransferase activity is the S581. An acyl-CoA contacts are provided by residues 647 to 648 and F671; that span reads DT. Residue K673 is modified to N6-acetyllysine. The residue at position 725 (S725) is a Phosphoserine. Position 773 (R773) interacts with an acyl-CoA. K790 carries the N6-acetyllysine modification. Residues 844–967 form an N-terminal hotdog fold region; the sequence is VPVAEDFPNG…VYLWEDPNSK (124 aa). One can recognise a PKS/mFAS DH domain in the interval 844 to 1104; it reads VPVAEDFPNG…ISRLQTTATS (261 aa). The Proton acceptor; for dehydratase activity role is filled by H878. Residues 982–1104 form a C-terminal hotdog fold region; the sequence is SVSRLTQGEV…ISRLQTTATS (123 aa). K993 is modified (N6-acetyllysine). The active-site Proton donor; for dehydratase activity is the D1032. Residues K1071 and K1276 each carry the N6-acetyllysine modification. Residue C1464 is modified to S-nitrosocysteine. 2 positions are modified to phosphoserine: S1577 and S1587. The segment at 1628–1856 is enoyl reductase; sequence DVPSSWTLEE…VQVREEEPEA (229 aa). Residue 1664–1681 coordinates NADP(+); that stretch reads VLIHSGSGGVGQAAISIA. K1697 is modified (N6-(pyridoxal phosphate)lysine; alternate). An N6-acetyllysine; alternate modification is found at K1697. Residues K1764 and K1840 each carry the N6-acetyllysine modification. Residues 1857–2111 are beta-ketoacyl reductase; that stretch reads VLPGAQPTLI…FVLAEKKAVA (255 aa). 1879–1894 lines the NADP(+) pocket; sequence SYIITGGLGGFGLELA. Residue K1988 is modified to N6-acetyllysine. S-nitrosocysteine is present on C2084. The Carrier domain occupies 2112–2192; it reads HGDGDTQRDL…EMSSKTDSAT (81 aa). S2150 is modified (O-(pantetheine 4'-phosphoryl)serine; alternate). S2150 bears the Phosphoserine; alternate mark. Residues 2181–2205 form a disordered region; the sequence is LQEMSSKTDSATDTTAPKSRSDTSL. A compositionally biased stretch (low complexity) spans 2185–2198; it reads SSKTDSATDTTAPK. 2 positions are modified to phosphoserine: S2190 and S2229. Residues 2201 to 2504 are thioesterase; that stretch reads SDTSLKQNQL…AEPRVSVREG (304 aa). S2301 acts as the For thioesterase activity in catalysis. Position 2384 is an N6-acetyllysine (K2384). K2442 is covalently cross-linked (Glycyl lysine isopeptide (Lys-Gly) (interchain with G-Cter in SUMO2)). The active-site For thioesterase activity is H2474.

As to quaternary structure, homodimer which is arranged in a head to tail fashion. Interacts with CEACAM1; this interaction is insulin and phosphorylation-dependent; reduces fatty-acid synthase activity. S-nitrosylation of Fatty acid synthase at cysteine residues Cys-1464 or Cys-2084 is important for the enzyme dimerization. In adipocytes, S-nitrosylation of Fatty acid synthase occurs under physiological conditions and gradually increases during adipogenesis.

The protein resides in the cytoplasm. Its subcellular location is the melanosome. It carries out the reaction acetyl-CoA + n malonyl-CoA + 2n NADPH + 2n H(+) = a long-chain fatty acid + (n+1) CoA + n CO2 + 2n NADP(+).. The enzyme catalyses holo-[ACP] + acetyl-CoA = acetyl-[ACP] + CoA. The catalysed reaction is holo-[ACP] + malonyl-CoA = malonyl-[ACP] + CoA. It catalyses the reaction a fatty acyl-[ACP] + malonyl-[ACP] + H(+) = a 3-oxoacyl-[ACP] + holo-[ACP] + CO2. It carries out the reaction a (3R)-hydroxyacyl-[ACP] + NADP(+) = a 3-oxoacyl-[ACP] + NADPH + H(+). The enzyme catalyses a (3R)-hydroxyacyl-[ACP] = a (2E)-enoyl-[ACP] + H2O. The catalysed reaction is a 2,3-saturated acyl-[ACP] + NADP(+) = a (2E)-enoyl-[ACP] + NADPH + H(+). It catalyses the reaction hexadecanoyl-[ACP] + H2O = hexadecanoate + holo-[ACP] + H(+). It carries out the reaction acetyl-[ACP] + malonyl-[ACP] + H(+) = 3-oxobutanoyl-[ACP] + holo-[ACP] + CO2. The enzyme catalyses 3-oxobutanoyl-[ACP] + NADPH + H(+) = (3R)-hydroxybutanoyl-[ACP] + NADP(+). The catalysed reaction is (3R)-hydroxybutanoyl-[ACP] = (2E)-butenoyl-[ACP] + H2O. It catalyses the reaction (2E)-butenoyl-[ACP] + NADPH + H(+) = butanoyl-[ACP] + NADP(+). It carries out the reaction butanoyl-[ACP] + malonyl-[ACP] + H(+) = 3-oxohexanoyl-[ACP] + holo-[ACP] + CO2. The enzyme catalyses 3-oxohexanoyl-[ACP] + NADPH + H(+) = (3R)-hydroxyhexanoyl-[ACP] + NADP(+). The catalysed reaction is (3R)-hydroxyhexanoyl-[ACP] = (2E)-hexenoyl-[ACP] + H2O. It catalyses the reaction (2E)-hexenoyl-[ACP] + NADPH + H(+) = hexanoyl-[ACP] + NADP(+). It carries out the reaction hexanoyl-[ACP] + malonyl-[ACP] + H(+) = 3-oxooctanoyl-[ACP] + holo-[ACP] + CO2. The enzyme catalyses 3-oxooctanoyl-[ACP] + NADPH + H(+) = (3R)-hydroxyoctanoyl-[ACP] + NADP(+). The catalysed reaction is (3R)-hydroxyoctanoyl-[ACP] = (2E)-octenoyl-[ACP] + H2O. It catalyses the reaction (2E)-octenoyl-[ACP] + NADPH + H(+) = octanoyl-[ACP] + NADP(+). It carries out the reaction octanoyl-[ACP] + malonyl-[ACP] + H(+) = 3-oxodecanoyl-[ACP] + holo-[ACP] + CO2. The enzyme catalyses 3-oxodecanoyl-[ACP] + NADPH + H(+) = (3R)-hydroxydecanoyl-[ACP] + NADP(+). The catalysed reaction is (3R)-hydroxydecanoyl-[ACP] = (2E)-decenoyl-[ACP] + H2O. It catalyses the reaction (2E)-decenoyl-[ACP] + NADPH + H(+) = decanoyl-[ACP] + NADP(+). It carries out the reaction decanoyl-[ACP] + malonyl-[ACP] + H(+) = 3-oxododecanoyl-[ACP] + holo-[ACP] + CO2. The enzyme catalyses 3-oxododecanoyl-[ACP] + NADPH + H(+) = (3R)-hydroxydodecanoyl-[ACP] + NADP(+). The catalysed reaction is (3R)-hydroxydodecanoyl-[ACP] = (2E)-dodecenoyl-[ACP] + H2O. It catalyses the reaction (2E)-dodecenoyl-[ACP] + NADPH + H(+) = dodecanoyl-[ACP] + NADP(+). It carries out the reaction dodecanoyl-[ACP] + malonyl-[ACP] + H(+) = 3-oxotetradecanoyl-[ACP] + holo-[ACP] + CO2. The enzyme catalyses 3-oxotetradecanoyl-[ACP] + NADPH + H(+) = (3R)-hydroxytetradecanoyl-[ACP] + NADP(+). The catalysed reaction is (3R)-hydroxytetradecanoyl-[ACP] = (2E)-tetradecenoyl-[ACP] + H2O. It catalyses the reaction (2E)-tetradecenoyl-[ACP] + NADPH + H(+) = tetradecanoyl-[ACP] + NADP(+). It carries out the reaction tetradecanoyl-[ACP] + malonyl-[ACP] + H(+) = 3-oxohexadecanoyl-[ACP] + holo-[ACP] + CO2. The enzyme catalyses 3-oxohexadecanoyl-[ACP] + NADPH + H(+) = (3R)-hydroxyhexadecanoyl-[ACP] + NADP(+). The catalysed reaction is (3R)-hydroxyhexadecanoyl-[ACP] = (2E)-hexadecenoyl-[ACP] + H2O. It catalyses the reaction (2E)-hexadecenoyl-[ACP] + NADPH + H(+) = hexadecanoyl-[ACP] + NADP(+). It carries out the reaction hexadecanoyl-[ACP] + malonyl-[ACP] + H(+) = 3-oxooctadecanoyl-[ACP] + holo-[ACP] + CO2. The enzyme catalyses 3-oxooctadecanoyl-[ACP] + NADPH + H(+) = (3R)-hydroxyoctadecanoyl-[ACP] + NADP(+). The catalysed reaction is (3R)-hydroxyoctadecanoyl-[ACP] = (2E)-octadecenoyl-[ACP] + H2O. It catalyses the reaction (2E)-octadecenoyl-[ACP] + NADPH + H(+) = octadecanoyl-[ACP] + NADP(+). It carries out the reaction tetradecanoyl-[ACP] + H2O = tetradecanoate + holo-[ACP] + H(+). It participates in lipid metabolism; fatty acid biosynthesis. Fatty acid synthetase is a multifunctional enzyme that catalyzes the de novo biosynthesis of long-chain saturated fatty acids starting from acetyl-CoA and malonyl-CoA in the presence of NADPH. This multifunctional protein contains 7 catalytic activities and a site for the binding of the prosthetic group 4'-phosphopantetheine of the acyl carrier protein ([ACP]) domain. The sequence is that of Fatty acid synthase (Fasn) from Mus musculus (Mouse).